Consider the following 101-residue polypeptide: Protein RnfH (101 aa).

This sequence belongs to the UPF0125 (RnfH) family.

This Coxiella burnetii (strain CbuK_Q154) (Coxiella burnetii (strain Q154)) protein is Protein RnfH.